The primary structure comprises 320 residues: ATP-dependent 6-phosphofructokinase (320 aa).

An ATP-binding site is contributed by Gly-12. Residues 22–26 (RGVVR) and 55–60 (RYSVSD) contribute to the ADP site. Residues 73 to 74 (RF) and 103 to 106 (GDGS) each bind ATP. Mg(2+) is bound at residue Asp-104. Residue 126 to 128 (TID) coordinates substrate. Asp-128 serves as the catalytic Proton acceptor. Arg-155 serves as a coordination point for ADP. Residues Arg-163 and 170-172 (MGR) contribute to the substrate site. Residues 186–188 (GCE), Lys-212, and 214–216 (KKH) each bind ADP. Substrate-binding positions include Glu-223, Arg-244, and 250 to 253 (HIQR).

It belongs to the phosphofructokinase type A (PFKA) family. ATP-dependent PFK group I subfamily. Prokaryotic clade 'B1' sub-subfamily. Homotetramer. Mg(2+) is required as a cofactor.

It localises to the cytoplasm. The catalysed reaction is beta-D-fructose 6-phosphate + ATP = beta-D-fructose 1,6-bisphosphate + ADP + H(+). It functions in the pathway carbohydrate degradation; glycolysis; D-glyceraldehyde 3-phosphate and glycerone phosphate from D-glucose: step 3/4. Its activity is regulated as follows. Allosterically activated by ADP and other diphosphonucleosides, and allosterically inhibited by phosphoenolpyruvate. Catalyzes the phosphorylation of D-fructose 6-phosphate to fructose 1,6-bisphosphate by ATP, the first committing step of glycolysis. The sequence is that of ATP-dependent 6-phosphofructokinase from Escherichia fergusonii (strain ATCC 35469 / DSM 13698 / CCUG 18766 / IAM 14443 / JCM 21226 / LMG 7866 / NBRC 102419 / NCTC 12128 / CDC 0568-73).